A 76-amino-acid polypeptide reads, in one-letter code: UPF0235 protein MMAR_2910 (76 aa).

The protein belongs to the UPF0235 family.

This is UPF0235 protein MMAR_2910 from Mycobacterium marinum (strain ATCC BAA-535 / M).